The chain runs to 347 residues: F-box/kelch-repeat protein At5g03020 (347 aa).

Residues 1-21 form a disordered region; it reads MTEEMSKESPPPPPTSFSSLP. The F-box domain occupies 14-62; the sequence is PTSFSSLPDDVALDCRARISRFHYPTLSLVSKGFRTLIASPELEATRSF. Kelch repeat units lie at residues 119–165 and 167–215; these read QIYI…VIDG and IYVI…KKKH.

This chain is F-box/kelch-repeat protein At5g03020, found in Arabidopsis thaliana (Mouse-ear cress).